A 364-amino-acid chain; its full sequence is Paraneoplastic antigen Ma2 (364 aa).

A2 is modified (N-acetylalanine). Acidic residues predominate over residues 335-351 (EEEEASFENESIEEPEE). Residues 335–364 (EEEEASFENESIEEPEERDGYGRWNHEGDD) are disordered. Basic and acidic residues predominate over residues 352–364 (RDGYGRWNHEGDD).

This sequence belongs to the PNMA family. As to expression, brain-specific. In some cancer patients, specifically expressed by testicular tumor cells.

The protein resides in the nucleus. The protein localises to the nucleolus. This chain is Paraneoplastic antigen Ma2 (PNMA2), found in Homo sapiens (Human).